Reading from the N-terminus, the 467-residue chain is 3-isopropylmalate dehydratase large subunit (467 aa).

Residues cysteine 348, cysteine 409, and cysteine 412 each coordinate [4Fe-4S] cluster. Residues 423–449 (NERSISTSNRNFEGRQGKGSRTHLASP) are disordered.

The protein belongs to the aconitase/IPM isomerase family. LeuC type 1 subfamily. Heterodimer of LeuC and LeuD. The cofactor is [4Fe-4S] cluster.

The catalysed reaction is (2R,3S)-3-isopropylmalate = (2S)-2-isopropylmalate. Its pathway is amino-acid biosynthesis; L-leucine biosynthesis; L-leucine from 3-methyl-2-oxobutanoate: step 2/4. In terms of biological role, catalyzes the isomerization between 2-isopropylmalate and 3-isopropylmalate, via the formation of 2-isopropylmaleate. The protein is 3-isopropylmalate dehydratase large subunit of Bifidobacterium longum subsp. infantis (strain ATCC 15697 / DSM 20088 / JCM 1222 / NCTC 11817 / S12).